Reading from the N-terminus, the 363-residue chain is N-acetylmuramate/N-acetylglucosamine kinase (363 aa).

It belongs to the kinase AmgK family.

It catalyses the reaction N-acetyl-D-muramate + ATP = N-acetyl-alpha-D-muramate 1-phosphate + ADP + H(+). It carries out the reaction N-acetyl-D-glucosamine + ATP = N-acetyl-alpha-D-glucosamine 1-phosphate + ADP + H(+). The protein operates within cell wall biogenesis; peptidoglycan recycling. Functionally, sugar kinase that catalyzes the ATP-dependent phosphorylation of N-acetylmuramate (MurNAc) and N-acetylglucosamine (GlcNAc) at its C1 hydroxyl group, leading to MurNAc alpha-1P and GlcNAc alpha-1P, respectively. Is likely involved in peptidoglycan recycling as part of a cell wall recycling pathway that bypasses de novo biosynthesis of the peptidoglycan precursor UDP-MurNAc. Is able to complement the fosfomycin sensitivity phenotype of a P.putida mutant lacking amgK. This is N-acetylmuramate/N-acetylglucosamine kinase from Caulobacter vibrioides (strain ATCC 19089 / CIP 103742 / CB 15) (Caulobacter crescentus).